A 734-amino-acid polypeptide reads, in one-letter code: Photosystem I P700 chlorophyll a apoprotein A2 (734 aa).

The next 8 membrane-spanning stretches (helical) occupy residues 46–69 (IFASHFGQLAIIFLWTSGNLFHVA), 135–158 (LYVGSIFLLVLAGLFLFAGWLHLQ), 175–199 (LNHHLAGLFGVSSLAWTGHLVHVAI), 273–291 (MAHHHLAIAVVFILAGHMY), 330–353 (LHFQLGLALASVGTICSLVAQHMY), 369–395 (ASLYTHHQYIAGFIMCGAFAHGAIFFV), 417–439 (AIISHLSWVSLFLGFHTLGLYVH), and 517–535 (FLVHHAIALGLHTTTLILV). Residues Cys559 and Cys568 each contribute to the [4Fe-4S] cluster site. 2 consecutive transmembrane segments (helical) span residues 575–596 (AFYLAVFWMLNTIGWVTFYFHW) and 643–665 (LSVWAWMFLFGHLIYATGFMFLI). Chlorophyll a-binding residues include His654, Met662, and Tyr670. Trp671 contacts phylloquinone. The chain crosses the membrane as a helical span at residues 707-727 (LVGLTHFSVGYVLTYAAFLIA).

It belongs to the PsaA/PsaB family. As to quaternary structure, the PsaA/B heterodimer binds the P700 chlorophyll special pair and subsequent electron acceptors. PSI consists of a core antenna complex that captures photons, and an electron transfer chain that converts photonic excitation into a charge separation. The eukaryotic PSI reaction center is composed of at least 11 subunits. Requires P700 is a chlorophyll a/chlorophyll a' dimer, A0 is one or more chlorophyll a, A1 is one or both phylloquinones and FX is a shared 4Fe-4S iron-sulfur center. as cofactor.

The protein localises to the plastid. Its subcellular location is the chloroplast thylakoid membrane. The catalysed reaction is reduced [plastocyanin] + hnu + oxidized [2Fe-2S]-[ferredoxin] = oxidized [plastocyanin] + reduced [2Fe-2S]-[ferredoxin]. Its function is as follows. PsaA and PsaB bind P700, the primary electron donor of photosystem I (PSI), as well as the electron acceptors A0, A1 and FX. PSI is a plastocyanin/cytochrome c6-ferredoxin oxidoreductase, converting photonic excitation into a charge separation, which transfers an electron from the donor P700 chlorophyll pair to the spectroscopically characterized acceptors A0, A1, FX, FA and FB in turn. Oxidized P700 is reduced on the lumenal side of the thylakoid membrane by plastocyanin or cytochrome c6. The chain is Photosystem I P700 chlorophyll a apoprotein A2 from Chlorella vulgaris (Green alga).